The sequence spans 99 residues: Aspartyl/glutamyl-tRNA(Asn/Gln) amidotransferase subunit C (99 aa).

Belongs to the GatC family. As to quaternary structure, heterotrimer of A, B and C subunits.

The catalysed reaction is L-glutamyl-tRNA(Gln) + L-glutamine + ATP + H2O = L-glutaminyl-tRNA(Gln) + L-glutamate + ADP + phosphate + H(+). It catalyses the reaction L-aspartyl-tRNA(Asn) + L-glutamine + ATP + H2O = L-asparaginyl-tRNA(Asn) + L-glutamate + ADP + phosphate + 2 H(+). Allows the formation of correctly charged Asn-tRNA(Asn) or Gln-tRNA(Gln) through the transamidation of misacylated Asp-tRNA(Asn) or Glu-tRNA(Gln) in organisms which lack either or both of asparaginyl-tRNA or glutaminyl-tRNA synthetases. The reaction takes place in the presence of glutamine and ATP through an activated phospho-Asp-tRNA(Asn) or phospho-Glu-tRNA(Gln). In Mycolicibacterium vanbaalenii (strain DSM 7251 / JCM 13017 / BCRC 16820 / KCTC 9966 / NRRL B-24157 / PYR-1) (Mycobacterium vanbaalenii), this protein is Aspartyl/glutamyl-tRNA(Asn/Gln) amidotransferase subunit C.